Consider the following 135-residue polypeptide: Large ribosomal subunit protein uL16c (135 aa).

Belongs to the universal ribosomal protein uL16 family. As to quaternary structure, part of the 50S ribosomal subunit.

The protein localises to the plastid. The protein resides in the chloroplast. The sequence is that of Large ribosomal subunit protein uL16c from Gossypium hirsutum (Upland cotton).